The primary structure comprises 450 residues: 3-phosphoshikimate 1-carboxyvinyltransferase (450 aa).

Positions 28, 29, and 33 each coordinate 3-phosphoshikimate. Lys-28 serves as a coordination point for phosphoenolpyruvate. Residues Gly-100 and Arg-128 each contribute to the phosphoenolpyruvate site. The 3-phosphoshikimate site is built by Ser-173, Gln-175, Asp-326, and Lys-353. Phosphoenolpyruvate is bound at residue Gln-175. Residue Asp-326 is the Proton acceptor of the active site. Arg-357 and Arg-402 together coordinate phosphoenolpyruvate.

Belongs to the EPSP synthase family. In terms of assembly, monomer.

It localises to the cytoplasm. The enzyme catalyses 3-phosphoshikimate + phosphoenolpyruvate = 5-O-(1-carboxyvinyl)-3-phosphoshikimate + phosphate. Its pathway is metabolic intermediate biosynthesis; chorismate biosynthesis; chorismate from D-erythrose 4-phosphate and phosphoenolpyruvate: step 6/7. Catalyzes the transfer of the enolpyruvyl moiety of phosphoenolpyruvate (PEP) to the 5-hydroxyl of shikimate-3-phosphate (S3P) to produce enolpyruvyl shikimate-3-phosphate and inorganic phosphate. The protein is 3-phosphoshikimate 1-carboxyvinyltransferase of Brucella melitensis biotype 1 (strain ATCC 23456 / CCUG 17765 / NCTC 10094 / 16M).